The chain runs to 887 residues: Alanine--tRNA ligase (887 aa).

4 residues coordinate Zn(2+): histidine 564, histidine 568, cysteine 676, and histidine 680.

Belongs to the class-II aminoacyl-tRNA synthetase family. It depends on Zn(2+) as a cofactor.

The protein localises to the cytoplasm. The catalysed reaction is tRNA(Ala) + L-alanine + ATP = L-alanyl-tRNA(Ala) + AMP + diphosphate. Functionally, catalyzes the attachment of alanine to tRNA(Ala) in a two-step reaction: alanine is first activated by ATP to form Ala-AMP and then transferred to the acceptor end of tRNA(Ala). Also edits incorrectly charged Ser-tRNA(Ala) and Gly-tRNA(Ala) via its editing domain. In Chelativorans sp. (strain BNC1), this protein is Alanine--tRNA ligase.